A 66-amino-acid chain; its full sequence is Movement protein TGBp3 (66 aa).

Over 1 to 2 (MD) the chain is Lumenal. A helical transmembrane segment spans residues 3–23 (FTTLIIIGVYLLVFIVYFAKI). The Cytoplasmic portion of the chain corresponds to 24 to 66 (NTSVCTISISGASIEISGCDNPTLFEILPKLRPFNHGLSLPSN).

It belongs to the Tymovirales TGBp3 protein family.

Its subcellular location is the host endoplasmic reticulum membrane. In terms of biological role, plays a role in viral cell-to-cell propagation, by facilitating genome transport to neighboring plant cells through plasmosdesmata. May induce the formation of granular vesicles derived from the Endoplasmic reticulum, which align on actin filaments. This Trifolium (WCMV) protein is Movement protein TGBp3.